The sequence spans 278 residues: Diaminopimelate epimerase (278 aa).

Residues Asn-13, Gln-46, and Asn-65 each contribute to the substrate site. The active-site Proton donor is the Cys-74. Residues 75–76 (GN), Asn-157, Asn-190, and 208–209 (ER) each bind substrate. The active-site Proton acceptor is Cys-217. 218–219 (GT) provides a ligand contact to substrate.

Belongs to the diaminopimelate epimerase family. Homodimer.

It is found in the cytoplasm. It catalyses the reaction (2S,6S)-2,6-diaminopimelate = meso-2,6-diaminopimelate. Its pathway is amino-acid biosynthesis; L-lysine biosynthesis via DAP pathway; DL-2,6-diaminopimelate from LL-2,6-diaminopimelate: step 1/1. Functionally, catalyzes the stereoinversion of LL-2,6-diaminopimelate (L,L-DAP) to meso-diaminopimelate (meso-DAP), a precursor of L-lysine and an essential component of the bacterial peptidoglycan. In Magnetococcus marinus (strain ATCC BAA-1437 / JCM 17883 / MC-1), this protein is Diaminopimelate epimerase.